The primary structure comprises 766 residues: Subtilisin-like protease SBT3.13 (766 aa).

The signal sequence occupies residues 1–21; sequence MNNSLQSSKLVLLLAIALVLF. Residues 22–120 constitute a propeptide, activation peptide; the sequence is LNTELDFLTA…VIPNRIRKLK (99 aa). Positions 41–119 constitute an Inhibitor I9 domain; that stretch reads VYIVYLGERE…HVIPNRIRKL (79 aa). The Peptidase S8 domain occupies 134–618; the sequence is PTSFSSLSSV…GGLVNPEKAA (485 aa). Asp-162 acts as the Charge relay system in catalysis. Residues Asn-195 and Asn-223 are each glycosylated (N-linked (GlcNAc...) asparagine). The Charge relay system role is filled by His-239. N-linked (GlcNAc...) asparagine glycans are attached at residues Asn-254 and Asn-389. Ser-549 (charge relay system) is an active-site residue. Residue Asn-641 is glycosylated (N-linked (GlcNAc...) asparagine).

This sequence belongs to the peptidase S8 family.

It is found in the secreted. The protein is Subtilisin-like protease SBT3.13 of Arabidopsis thaliana (Mouse-ear cress).